Consider the following 239-residue polypeptide: Peptidyl-tRNA hydrolase (239 aa).

A tRNA-binding site is contributed by Tyr-14. Residue His-19 is the Proton acceptor of the active site. Phe-64, Asn-66, and Asn-112 together coordinate tRNA. Residues 199–227 (EKPAQKGRSHIRQARPKAPPAELPSSGPM) form a disordered region. Over residues 203 to 213 (QKGRSHIRQAR) the composition is skewed to basic residues.

It belongs to the PTH family. Monomer.

Its subcellular location is the cytoplasm. The enzyme catalyses an N-acyl-L-alpha-aminoacyl-tRNA + H2O = an N-acyl-L-amino acid + a tRNA + H(+). In terms of biological role, hydrolyzes ribosome-free peptidyl-tRNAs (with 1 or more amino acids incorporated), which drop off the ribosome during protein synthesis, or as a result of ribosome stalling. Its function is as follows. Catalyzes the release of premature peptidyl moieties from peptidyl-tRNA molecules trapped in stalled 50S ribosomal subunits, and thus maintains levels of free tRNAs and 50S ribosomes. The sequence is that of Peptidyl-tRNA hydrolase from Chelativorans sp. (strain BNC1).